The sequence spans 644 residues: DNA mismatch repair protein MutL (644 aa).

Residues 340-360 (KKEKDESVQEQFKFEHTKPRE) are compositionally biased toward basic and acidic residues. A disordered region spans residues 340–425 (KKEKDESVQE…ETVREEKEWT (86 aa)). A compositionally biased stretch (low complexity) spans 387-400 (QLWQPPKQEWQPPQ). Positions 416-425 (ETVREEKEWT) are enriched in basic and acidic residues.

This sequence belongs to the DNA mismatch repair MutL/HexB family.

This protein is involved in the repair of mismatches in DNA. It is required for dam-dependent methyl-directed DNA mismatch repair. May act as a 'molecular matchmaker', a protein that promotes the formation of a stable complex between two or more DNA-binding proteins in an ATP-dependent manner without itself being part of a final effector complex. This chain is DNA mismatch repair protein MutL, found in Bacillus mycoides (strain KBAB4) (Bacillus weihenstephanensis).